A 147-amino-acid polypeptide reads, in one-letter code: Hemoglobin subunit beta (147 aa).

Residue V2 is modified to N-acetylvaline. The Globin domain occupies 3-147; sequence HLSGDEKNAV…VANALAHRYH (145 aa). S45 carries the post-translational modification Phosphoserine. K60 is modified (N6-acetyllysine). Residue H64 participates in heme b binding. An N6-acetyllysine modification is found at K83. Residue H93 coordinates heme b. S-nitrosocysteine is present on C94.

Belongs to the globin family. In terms of assembly, heterotetramer of two alpha chains and two beta chains. In terms of tissue distribution, red blood cells.

Involved in oxygen transport from the lung to the various peripheral tissues. In Camelus dromedarius (Dromedary), this protein is Hemoglobin subunit beta (HBB).